The primary structure comprises 259 residues: E3 ubiquitin-protein ligase RNF170 (259 aa).

At 1 to 25 (MAKYQGEVQSLKLDDDSVIEGVSDQ) the chain is on the lumenal side. A helical membrane pass occupies residues 26 to 46 (VLVAVVVSLALIATLVYALFS). Over 47–202 (RNAHQNIHPE…GGLFWMFRIR (156 aa)) the chain is Cytoplasmic. An RING-type zinc finger spans residues 88 to 131 (CPICLHQASLPVETNCGHLFCGTCIVAYWRYGSWLGAISCPICR). A helical transmembrane segment spans residues 203–223 (IILCLMGAFFYLISPLDFVPE). Position 224 (Ala-224) is a topological domain, lumenal. Residues 225 to 245 (LFGILGFLDDFFVIFLLLIYI) traverse the membrane as a helical segment. Residues 246-259 (SIMYREVITQRLNR) are Cytoplasmic-facing.

As to quaternary structure, constitutively associated with the ERLIN1/ERLIN 2 complex. Interacts with activated ITPR1.

It localises to the endoplasmic reticulum membrane. The catalysed reaction is S-ubiquitinyl-[E2 ubiquitin-conjugating enzyme]-L-cysteine + [acceptor protein]-L-lysine = [E2 ubiquitin-conjugating enzyme]-L-cysteine + N(6)-ubiquitinyl-[acceptor protein]-L-lysine.. It functions in the pathway protein modification; protein ubiquitination. In terms of biological role, E3 ubiquitin-protein ligase. Plays an essential role in stimulus-induced inositol 1,4,5-trisphosphate receptor type 1 (ITPR1) ubiquitination and degradation via the endoplasmic reticulum-associated degradation (ERAD) pathway. Also involved in ITPR1 turnover in resting cells. Selectively inhibits the TLR3-triggered innate immune response by promoting the 'Lys-48'-linked polyubiquitination and degradation of TLR3. The polypeptide is E3 ubiquitin-protein ligase RNF170 (RNF170) (Bos taurus (Bovine)).